The sequence spans 227 residues: Cytidylate kinase (227 aa).

12 to 20 (GPGGAGKGT) serves as a coordination point for ATP.

Belongs to the cytidylate kinase family. Type 1 subfamily.

It is found in the cytoplasm. It catalyses the reaction CMP + ATP = CDP + ADP. It carries out the reaction dCMP + ATP = dCDP + ADP. This chain is Cytidylate kinase, found in Klebsiella pneumoniae (strain 342).